A 176-amino-acid chain; its full sequence is Urease accessory protein UreE (176 aa).

Residues 147-176 (AGAYQQGGGHSHGHAHSHSHEKPHSHTHNH) form a disordered region.

Belongs to the UreE family.

Its subcellular location is the cytoplasm. In terms of biological role, involved in urease metallocenter assembly. Binds nickel. Probably functions as a nickel donor during metallocenter assembly. In Alcanivorax borkumensis (strain ATCC 700651 / DSM 11573 / NCIMB 13689 / SK2), this protein is Urease accessory protein UreE.